The following is a 514-amino-acid chain: Bifunctional lysine-specific demethylase and histidyl-hydroxylase NO66 (514 aa).

The tract at residues 1 to 53 (MKRGLEEEIEEMSEEEVGVNNNNNGKKKKKKVVKKSKPVPLTKSVPQVSSQPL) is disordered. Residues 7–17 (EEIEEMSEEEV) show a composition bias toward acidic residues. Positions 25–37 (GKKKKKKVVKKSK) are enriched in basic residues. Residues 44–53 (SVPQVSSQPL) are compositionally biased toward polar residues. In terms of domain architecture, JmjC spans 180 to 327 (CSVRLLNPQT…IGKVLNRALE (148 aa)). Residues H226, D228, and H291 each contribute to the Fe cation site.

The protein belongs to the ROX family. NO66 subfamily. Fe(2+) is required as a cofactor.

The protein resides in the nucleus. The enzyme catalyses N(6),N(6)-dimethyl-L-lysyl(36)-[histone H3] + 2 2-oxoglutarate + 2 O2 = L-lysyl(36)-[histone H3] + 2 formaldehyde + 2 succinate + 2 CO2. In terms of biological role, oxygenase that can act as both a histone lysine demethylase and a ribosomal histidine hydroxylase. Specifically demethylates 'Lys-4' (H3K4me) and 'Lys-36' (H3K36me) of histone H3, thereby playing a central role in histone code. In Dictyostelium discoideum (Social amoeba), this protein is Bifunctional lysine-specific demethylase and histidyl-hydroxylase NO66 (jcdg).